The sequence spans 312 residues: Glycerol-3-phosphate dehydrogenase [NAD(P)+] (312 aa).

NADPH contacts are provided by W11, R30, R31, and K95. K95, G123, and S125 together coordinate sn-glycerol 3-phosphate. A127 lines the NADPH pocket. Sn-glycerol 3-phosphate is bound by residues K177, D230, S240, R241, and N242. The active-site Proton acceptor is the K177. R241 lines the NADPH pocket. V265 and E267 together coordinate NADPH.

Belongs to the NAD-dependent glycerol-3-phosphate dehydrogenase family.

Its subcellular location is the cytoplasm. It carries out the reaction sn-glycerol 3-phosphate + NAD(+) = dihydroxyacetone phosphate + NADH + H(+). It catalyses the reaction sn-glycerol 3-phosphate + NADP(+) = dihydroxyacetone phosphate + NADPH + H(+). It participates in membrane lipid metabolism; glycerophospholipid metabolism. In terms of biological role, catalyzes the reduction of the glycolytic intermediate dihydroxyacetone phosphate (DHAP) to sn-glycerol 3-phosphate (G3P), the key precursor for phospholipid synthesis. The sequence is that of Glycerol-3-phosphate dehydrogenase [NAD(P)+] from Helicobacter pylori (strain P12).